The primary structure comprises 491 residues: Argininosuccinate lyase (491 aa).

This sequence belongs to the lyase 1 family. Argininosuccinate lyase subfamily.

Its subcellular location is the cytoplasm. It catalyses the reaction 2-(N(omega)-L-arginino)succinate = fumarate + L-arginine. Its pathway is amino-acid biosynthesis; L-arginine biosynthesis; L-arginine from L-ornithine and carbamoyl phosphate: step 3/3. The protein is Argininosuccinate lyase of Methanosarcina mazei (strain ATCC BAA-159 / DSM 3647 / Goe1 / Go1 / JCM 11833 / OCM 88) (Methanosarcina frisia).